A 130-amino-acid chain; its full sequence is Blasticidin-S deaminase (130 aa).

A CMP/dCMP-type deaminase domain is found at 1 to 129; sequence MPLSQEESTL…ELLPSGYMNR (129 aa). Ser-28 is a binding site for substrate. Zn(2+) is bound at residue Cys-54. Residue Glu-56 is the Proton donor of the active site. Arg-82 is a substrate binding site. Zn(2+) is bound by residues Cys-88 and Cys-91. Tyr-126 contacts substrate.

The protein belongs to the cytidine and deoxycytidylate deaminase family. As to quaternary structure, homotetramer. It depends on Zn(2+) as a cofactor.

The enzyme catalyses blasticidin S + H2O + H(+) = deaminohydroxyblasticidin S + NH4(+). Its function is as follows. Catalyzes the deamination of the cytosine moiety of the antibiotics blasticidin S, cytomycin and acetylblasticidin S. The chain is Blasticidin-S deaminase (bsd) from Aspergillus terreus (strain NIH 2624 / FGSC A1156).